We begin with the raw amino-acid sequence, 209 residues long: Uracil phosphoribosyltransferase (209 aa).

5-phospho-alpha-D-ribose 1-diphosphate-binding positions include R79, R104, and D131–S139. Uracil contacts are provided by residues I194 and G199–A201. D200 serves as a coordination point for 5-phospho-alpha-D-ribose 1-diphosphate.

This sequence belongs to the UPRTase family. Mg(2+) is required as a cofactor.

The enzyme catalyses UMP + diphosphate = 5-phospho-alpha-D-ribose 1-diphosphate + uracil. Its pathway is pyrimidine metabolism; UMP biosynthesis via salvage pathway; UMP from uracil: step 1/1. Allosterically activated by GTP. Catalyzes the conversion of uracil and 5-phospho-alpha-D-ribose 1-diphosphate (PRPP) to UMP and diphosphate. In Bacillus velezensis (strain DSM 23117 / BGSC 10A6 / LMG 26770 / FZB42) (Bacillus amyloliquefaciens subsp. plantarum), this protein is Uracil phosphoribosyltransferase.